The sequence spans 435 residues: Diguanylate cyclase TpbB (435 aa).

The Cytoplasmic segment spans residues Met1–His22. The chain crosses the membrane as a helical span at residues Leu23–Leu43. The Periplasmic portion of the chain corresponds to Thr44–Arg154. Residues Phe155–Phe175 traverse the membrane as a helical segment. Residues Tyr176–Lys435 are Cytoplasmic-facing. The region spanning Arg183–Ala236 is the HAMP domain. Positions Glu279 to Asp415 constitute a GGDEF domain. Mg(2+)-binding residues include Ser288 and Asp330. The active-site Proton acceptor is the Asp330. The span at Asn414–Asp426 shows a compositional bias: basic and acidic residues. The segment at Asn414–Lys435 is disordered.

It depends on Mg(2+) as a cofactor. Post-translationally, phosphorylated at both Tyr residues and Ser/Thr residues. Dephosphorylated and inactivated by TpbA.

The protein localises to the cell inner membrane. The enzyme catalyses 2 GTP = 3',3'-c-di-GMP + 2 diphosphate. Its pathway is purine metabolism; 3',5'-cyclic di-GMP biosynthesis. Activity is tightly controlled by YfiR, a small periplasmic protein, and the OmpA/Pal-like outer-membrane lipoprotein YfiB. Diguanylate cyclase activity is inhibited by the specific interaction of YfiR with the TpbB periplasmic domain and is activated by YfiB, which releases the YfiR-mediated repression through sequestration of YfiR to the outer membrane. Activity is also controlled by dephosphorylation of the periplasmic domain by the tyrosine phosphatase TpbA. Its function is as follows. Catalyzes the synthesis of cyclic-di-GMP (c-di-GMP) via the condensation of 2 GTP molecules. Important for the regulation of biofilm maintenance when exposed to peroxide. Functionally, part of the YfiB-TpbB-YfiR (or yfiBNR) system, encoding a tripartite signaling module that modulates intracellular c-di-GMP levels. The system is a key regulator of the small colony variant (SCV) phenotype, and plays an important role in biofilm formation and in vivo persistence. The c-di-GMP produced by TpbB/YfiN stimulates the production of the Pel and Psl exopolysaccharides, which promotes surface attachment, generates an SCV phenotype and confers resistance against phagocytosis. The sequence is that of Diguanylate cyclase TpbB from Pseudomonas aeruginosa (strain UCBPP-PA14).